The chain runs to 323 residues: uncharacterized protein (323 aa).

The region spanning 1–142 (MPSVFFSYSH…QVAKAVREAA (142 aa)) is the TIR domain.

This is an uncharacterized protein from Sinorhizobium fredii (strain NBRC 101917 / NGR234).